Reading from the N-terminus, the 140-residue chain is Probable deoxyuridine 5'-triphosphate nucleotidohydrolase (140 aa).

Residues 62–64 (RSG), 76–79 (GVID), arginine 130, and 135–136 (FG) contribute to the substrate site.

This sequence belongs to the dUTPase family. Homotrimer. Mg(2+) serves as cofactor.

The enzyme catalyses dUTP + H2O = dUMP + diphosphate + H(+). Its pathway is pyrimidine metabolism; dUMP biosynthesis; dUMP from dCTP (dUTP route): step 2/2. This enzyme is involved in nucleotide metabolism: it produces dUMP, the immediate precursor of thymidine nucleotides and it decreases the intracellular concentration of dUTP so that uracil cannot be incorporated into DNA. The protein is Probable deoxyuridine 5'-triphosphate nucleotidohydrolase of Schizosaccharomyces pombe (strain 972 / ATCC 24843) (Fission yeast).